Reading from the N-terminus, the 281-residue chain is UPF0273 protein PAE3143 (281 aa).

The 245-residue stretch at 4–248 folds into the KaiC domain; that stretch reads PRVRSYVPGL…YIKITGSSVR (245 aa). An ATP-binding site is contributed by 31 to 38; it reads GGPGTGKS.

It belongs to the UPF0273 family.

In Pyrobaculum aerophilum (strain ATCC 51768 / DSM 7523 / JCM 9630 / CIP 104966 / NBRC 100827 / IM2), this protein is UPF0273 protein PAE3143.